We begin with the raw amino-acid sequence, 417 residues long: Snake venom metalloproteinase aculysin-1 (417 aa).

The signal sequence occupies residues 1 to 20 (MIQVLLVTICLAAFPYQGSS). Positions 21-189 (IMLESGKVND…KKPSWLNLTP (169 aa)) are excised as a propeptide. Residues 197–392 (TSVNLQLIVD…KKPKCIHKKS (196 aa)) enclose the Peptidase M12B domain. 3 disulfide bridges follow: C308–C387, C349–C371, and C351–C354. Residue H333 coordinates Zn(2+). The active site involves E334. Zn(2+) is bound by residues H337 and H343. Positions 393–417 (LKTDTVSTSVSGNEPLDDNVDGFHA) are excised as a propeptide. The disordered stretch occupies residues 398 to 417 (VSTSVSGNEPLDDNVDGFHA). Positions 407–417 (PLDDNVDGFHA) are enriched in acidic residues.

This sequence belongs to the venom metalloproteinase (M12B) family. P-I subfamily. In terms of assembly, monomer. The cofactor is Zn(2+). Expressed by the venom gland.

Its subcellular location is the secreted. In terms of biological role, this protein is an alkaline zinc metalloprotease from snake venom that possesses weak hemorrhagic activity. In Deinagkistrodon acutus (Hundred-pace snake), this protein is Snake venom metalloproteinase aculysin-1.